We begin with the raw amino-acid sequence, 240 residues long: Uridylate kinase (240 aa).

12–15 (KISG) contributes to the ATP binding site. The interval 20–25 (GNQGFG) is involved in allosteric activation by GTP. Residue glycine 54 coordinates UMP. ATP contacts are provided by glycine 55 and arginine 59. UMP is bound by residues aspartate 74 and 135-142 (TGNPYFST). Tyrosine 168 and aspartate 171 together coordinate ATP.

The protein belongs to the UMP kinase family. In terms of assembly, homohexamer.

The protein resides in the cytoplasm. It catalyses the reaction UMP + ATP = UDP + ADP. It participates in pyrimidine metabolism; CTP biosynthesis via de novo pathway; UDP from UMP (UMPK route): step 1/1. Its activity is regulated as follows. Allosterically activated by GTP. Inhibited by UTP. Functionally, catalyzes the reversible phosphorylation of UMP to UDP. This Moorella thermoacetica (strain ATCC 39073 / JCM 9320) protein is Uridylate kinase.